Reading from the N-terminus, the 253-residue chain is MRKPIIAGNWKMNKVLSEAVSFVEEVKSSIPAADKAEAVVCAPALFLEKLTSAVKGTDLKVGAQNMHFEESGAFTGEISPAALKDLGVEYCVIGHSERREMFAETDETVNKKAHAAFKYGIVPIICVGETLEEREANKTNELVADQVKKALAGLTTEQVAASVIAYEPIWAIGTGKSSTAQDANEVCAHIRKTVASEFGQTAADSVRIQYGGSVKPANIKEYMAESDIDGALVGGASLEPQSFVQLLEAGQYE.

9–11 (NWK) contacts substrate. His95 serves as the catalytic Electrophile. The active-site Proton acceptor is the Glu167. Substrate contacts are provided by residues Gly173, Ser213, and 234–235 (GG). Ser213 carries the phosphoserine modification.

This sequence belongs to the triosephosphate isomerase family. Homodimer.

It is found in the cytoplasm. The catalysed reaction is D-glyceraldehyde 3-phosphate = dihydroxyacetone phosphate. It functions in the pathway carbohydrate biosynthesis; gluconeogenesis. Its pathway is carbohydrate degradation; glycolysis; D-glyceraldehyde 3-phosphate from glycerone phosphate: step 1/1. Functionally, involved in the gluconeogenesis. Catalyzes stereospecifically the conversion of dihydroxyacetone phosphate (DHAP) to D-glyceraldehyde-3-phosphate (G3P). This chain is Triosephosphate isomerase, found in Bacillus licheniformis (strain ATCC 14580 / DSM 13 / JCM 2505 / CCUG 7422 / NBRC 12200 / NCIMB 9375 / NCTC 10341 / NRRL NRS-1264 / Gibson 46).